A 542-amino-acid polypeptide reads, in one-letter code: Sensor protein CitS (542 aa).

Residues 1 to 13 (MVKKRFHFSLQTK) are Cytoplasmic-facing. A helical transmembrane segment spans residues 14–34 (IMGLIAALLVFVIGVLTITLA). Residues 35–175 (VQHTQGERRQ…TEQSIKKHLR (141 aa)) lie on the Extracellular side of the membrane. Residues 176-196 (NLSVIAVLVLLLGFIGAAVLA) traverse the membrane as a helical segment. Over 197 to 542 (KSIRKDTLGL…PFDSHRDCGG (346 aa)) the chain is Cytoplasmic. The region spanning 216-279 (RERNAMLFAI…MSVLEKGEML (64 aa)) is the PAS domain. The Histidine kinase domain occupies 336–528 (AQTHEFSNKL…VFTVFIPKEK (193 aa)). Residue H339 is modified to Phosphohistidine; by autocatalysis.

Its subcellular location is the cell membrane. It carries out the reaction ATP + protein L-histidine = ADP + protein N-phospho-L-histidine.. Its function is as follows. Member of the two-component regulatory system CitT/CitS. Regulates the expression of the citM-yflN operon. Functions probably as a membrane-associated protein kinase that phosphorylates CitT in response to environmental citrate or Mg(2+)-citrate complex. The protein is Sensor protein CitS (citS) of Bacillus subtilis (strain 168).